Here is a 445-residue protein sequence, read N- to C-terminus: Anthranilate N-benzoyltransferase protein 3 (445 aa).

Catalysis depends on proton acceptor residues His-164 and Asp-392.

This sequence belongs to the plant acyltransferase family. Post-translationally, N-terminus is blocked.

It carries out the reaction anthranilate + benzoyl-CoA = N-benzoylanthranilate + CoA. Its pathway is phytoalexin biosynthesis; methoxydianthramide B biosynthesis. Its function is as follows. Catalyzes the formation of N-benzoylanthranilate, in the course of methoxydianthramide B, a phytoalexin. Phytoalexins are produced in response to infection by parasites, and are essential for the expression of disease resistance. This is Anthranilate N-benzoyltransferase protein 3 (HCBT3) from Dianthus caryophyllus (Carnation).